Here is a 257-residue protein sequence, read N- to C-terminus: uncharacterized protein (257 aa).

6 helical membrane passes run 5–25 (FLYF…IVTF), 29–49 (LALV…GTLI), 53–73 (TLSF…GDWI), 146–166 (LGCI…GIAI), 180–200 (IQFL…WKLW), and 216–236 (VNLC…MIYI).

Belongs to the DedA family.

It localises to the cell membrane. This is an uncharacterized protein from Buchnera aphidicola subsp. Baizongia pistaciae (strain Bp).